The sequence spans 308 residues: ATP synthase gamma chain (308 aa).

This sequence belongs to the ATPase gamma chain family. F-type ATPases have 2 components, CF(1) - the catalytic core - and CF(0) - the membrane proton channel. CF(1) has five subunits: alpha(3), beta(3), gamma(1), delta(1), epsilon(1). CF(0) has three main subunits: a, b and c.

It localises to the cell membrane. In terms of biological role, produces ATP from ADP in the presence of a proton gradient across the membrane. The gamma chain is believed to be important in regulating ATPase activity and the flow of protons through the CF(0) complex. This is ATP synthase gamma chain from Lacticaseibacillus casei (strain BL23) (Lactobacillus casei).